Reading from the N-terminus, the 226-residue chain is P24 oleosin isoform A (226 aa).

The tract at residues 1 to 76 (MTTQVPPHSV…GILLLLAGLT (76 aa)) is polar. 3 helical membrane passes run 56 to 76 (VLAV…AGLT), 90 to 110 (LFVL…LAVA), and 111 to 131 (GFLT…WILN). The interval 77–130 (LAGTLTGLAVATPLFVLFSPVLVPATVAIGLAVAGFLTSGAFGLTALSSFSWIL) is hydrophobic. 5 consecutive repeat copies span residues 159–165 (GQKTKEV), 166–173 (GQKTKEVG), 184–191 (REAAARDA), 192–199 (REAAARDA), and 200–207 (REAAARDA). A 2 X 7 AA tandem repeats region spans residues 159–173 (GQKTKEVGQKTKEVG). 2 stretches are compositionally biased toward basic and acidic residues: residues 164-173 (EVGQKTKEVG) and 181-216 (QDTR…DVKR). The tract at residues 164–226 (EVGQKTKEVG…TTVTATTATA (63 aa)) is disordered. The 3 X 8 AA tandem repeats stretch occupies residues 184 to 207 (REAAARDAREAAARDAREAAARDA). Low complexity predominate over residues 217-226 (TTVTATTATA).

The protein belongs to the oleosin family.

The protein resides in the lipid droplet. It localises to the membrane. Its function is as follows. May have a structural role to stabilize the lipid body during desiccation of the seed by preventing coalescence of the oil. Probably interacts with both lipid and phospholipid moieties of lipid bodies. May also provide recognition signals for specific lipase anchorage in lipolysis during seedling growth. In Glycine max (Soybean), this protein is P24 oleosin isoform A.